The sequence spans 135 residues: Large ribosomal subunit protein eL32 (135 aa).

Belongs to the eukaryotic ribosomal protein eL32 family.

In Methanococcus maripaludis (strain C7 / ATCC BAA-1331), this protein is Large ribosomal subunit protein eL32.